A 236-amino-acid polypeptide reads, in one-letter code: Leucyl/phenylalanyl-tRNA--protein transferase (236 aa).

Belongs to the L/F-transferase family.

It localises to the cytoplasm. The enzyme catalyses N-terminal L-lysyl-[protein] + L-leucyl-tRNA(Leu) = N-terminal L-leucyl-L-lysyl-[protein] + tRNA(Leu) + H(+). It carries out the reaction N-terminal L-arginyl-[protein] + L-leucyl-tRNA(Leu) = N-terminal L-leucyl-L-arginyl-[protein] + tRNA(Leu) + H(+). It catalyses the reaction L-phenylalanyl-tRNA(Phe) + an N-terminal L-alpha-aminoacyl-[protein] = an N-terminal L-phenylalanyl-L-alpha-aminoacyl-[protein] + tRNA(Phe). Functionally, functions in the N-end rule pathway of protein degradation where it conjugates Leu, Phe and, less efficiently, Met from aminoacyl-tRNAs to the N-termini of proteins containing an N-terminal arginine or lysine. The sequence is that of Leucyl/phenylalanyl-tRNA--protein transferase from Aliivibrio salmonicida (strain LFI1238) (Vibrio salmonicida (strain LFI1238)).